The following is a 116-amino-acid chain: Ribosome-binding factor A (116 aa).

This sequence belongs to the RbfA family. In terms of assembly, monomer. Binds 30S ribosomal subunits, but not 50S ribosomal subunits or 70S ribosomes.

The protein resides in the cytoplasm. Functionally, one of several proteins that assist in the late maturation steps of the functional core of the 30S ribosomal subunit. Associates with free 30S ribosomal subunits (but not with 30S subunits that are part of 70S ribosomes or polysomes). Required for efficient processing of 16S rRNA. May interact with the 5'-terminal helix region of 16S rRNA. The protein is Ribosome-binding factor A of Streptococcus pyogenes serotype M5 (strain Manfredo).